A 453-amino-acid polypeptide reads, in one-letter code: MAGAGGGGCPAGGNDFQWCFSQVKGAVDEDVAEADIISTVEFNYSGDLLATGDKGGRVVIFQREQENKGRAHSRGEYNVYSTFQSHEPEFDYLKSLEIEEKINKIRWLPQQNAAHFLLSTNDKTIKLWKISERDKRAEGYNLKDEDGRLRDPFRITALRVPILKPMDLMVEASPRRIFANAHTYHINSISVNSDHETYLSADDLRINLWHLEITDRSFNIVDIKPANMEELTEVITAAEFHPHQCNVFVYSSSKGTIRLCDMRSSALCDRHAKFFEEPEDPSSRSFFSEIISSISDVKFSHSGRYMMTRDYLSVKVWDLNMEGRPVETHQVHEYLRSKLCSLYENDCIFDKFECCWNGSDSAIMTGSYNNFFRMFDRNTRRDVTLEASRENSKPRASLKPRKVCTGGKRKKDEISVDSLDFNKKILHTAWHPMESIIAVAATNNLYIFQDKIN.

WD repeat units follow at residues 32-71 (AEAD…KGRA), 97-138 (EIEE…KRAE), 181-219 (AHTY…RSFN), and 230-270 (ELTE…LCDR). At Ser-285 the chain carries Phosphoserine. WD repeat units follow at residues 289–327 (EIIS…RPVE), 344–385 (ENDC…DVTL), and 420–452 (DFNK…QDKI). At Tyr-305 the chain carries Phosphotyrosine. Thr-308 is subject to Phosphothreonine.

Belongs to the phosphatase 2A regulatory subunit B family. As to quaternary structure, PP2A consists of a common heterodimeric core enzyme, composed of a 36 kDa catalytic subunit (subunit C) and a 65 kDa constant regulatory subunit (PR65 or subunit A), that associates with a variety of regulatory subunits. Proteins that associate with the core dimer include three families of regulatory subunits B (the R2/B/PR55/B55, R3/B''/PR72/PR130/PR59 and R5/B'/B56 families), the 48 kDa variable regulatory subunit, viral proteins, and cell signaling molecules. Interacts with IER5.

The protein localises to the cytoplasm. Its function is as follows. Substrate-recognition subunit of protein phosphatase 2A (PP2A) that plays a key role in cell cycle by controlling mitosis entry and exit. Involved in chromosome clustering during late mitosis by mediating dephosphorylation of MKI67. The activity of PP2A complexes containing PPP2R2D (PR55-delta) fluctuate during the cell cycle: the activity is high in interphase and low in mitosis. The protein is Serine/threonine-protein phosphatase 2A 55 kDa regulatory subunit B delta isoform of Mus musculus (Mouse).